A 101-amino-acid polypeptide reads, in one-letter code: Small ribosomal subunit protein uS14 (101 aa).

It belongs to the universal ribosomal protein uS14 family. In terms of assembly, part of the 30S ribosomal subunit. Contacts proteins S3 and S10.

In terms of biological role, binds 16S rRNA, required for the assembly of 30S particles and may also be responsible for determining the conformation of the 16S rRNA at the A site. This is Small ribosomal subunit protein uS14 from Aliivibrio fischeri (strain MJ11) (Vibrio fischeri).